The chain runs to 323 residues: tRNA U34 carboxymethyltransferase (323 aa).

Residues Lys91, Trp105, Lys110, Gly130, Asp152 to Thr154, Ile181 to Glu182, Met196, Tyr200, and Arg315 each bind carboxy-S-adenosyl-L-methionine.

The protein belongs to the class I-like SAM-binding methyltransferase superfamily. CmoB family. Homotetramer.

It carries out the reaction carboxy-S-adenosyl-L-methionine + 5-hydroxyuridine(34) in tRNA = 5-carboxymethoxyuridine(34) in tRNA + S-adenosyl-L-homocysteine + H(+). Functionally, catalyzes carboxymethyl transfer from carboxy-S-adenosyl-L-methionine (Cx-SAM) to 5-hydroxyuridine (ho5U) to form 5-carboxymethoxyuridine (cmo5U) at position 34 in tRNAs. The sequence is that of tRNA U34 carboxymethyltransferase from Salmonella typhimurium (strain LT2 / SGSC1412 / ATCC 700720).